The primary structure comprises 295 residues: Protein gurken (295 aa).

Residues M1–C26 form the signal peptide. Residues S27–H247 are Extracellular-facing. 2 disordered regions span residues E78 to A111 and T124 to E175. Over residues T124 to S139 the composition is skewed to polar residues. Composition is skewed to low complexity over residues E140–G152 and S159–P171. The EGF-like domain maps to Q179–A224. Disulfide bonds link C183/C198, C192/C212, and C214/C223. Residues N188 and N205 are each glycosylated (N-linked (GlcNAc...) asparagine). The segment at V215–M245 is interaction with cni. Residues I248–V268 form a helical membrane-spanning segment. Over F269 to C295 the chain is Cytoplasmic.

In terms of assembly, interacts with cni. As to expression, expressed in nurse cells and oocyte up to oogenesis stage 7. Specifically accumulates in dorsal anterior corner of the oocyte during stages 9/10, at later stages expression is seen as an anterior ring. In stage 10 ovaries, it is concentrated between the oocyte nucleus and the adjacent oolemma. During vitellogenesis stage it can be detected at the oocyte surface, especially on the microvilli. It is also found at the microvilli covering the apical surface of the follicular epithelium and within follicle cells.

It localises to the cell membrane. In terms of biological role, critical for defining the anterior-posterior and dorsal-ventral axes of the egg. May signal directly to dorsal follicle cells through the receptor torpedo (top). During oogenesis this signaling pathway instructs follicle cells to follow a dorsal pathway of development rather than the default ventral pathway. This is Protein gurken (grk) from Drosophila melanogaster (Fruit fly).